A 113-amino-acid chain; its full sequence is Hydrogenase maturation factor HypA (113 aa).

Histidine 2 lines the Ni(2+) pocket. Zn(2+) is bound by residues cysteine 73, cysteine 76, cysteine 89, and cysteine 92.

This sequence belongs to the HypA/HybF family.

In terms of biological role, involved in the maturation of [NiFe] hydrogenases. Required for nickel insertion into the metal center of the hydrogenase. This Moorella thermoacetica (strain ATCC 39073 / JCM 9320) protein is Hydrogenase maturation factor HypA.